The primary structure comprises 253 residues: Serine/threonine-protein phosphatase 3 (253 aa).

Requires Mn(2+) as cofactor. In terms of processing, phosphorylated by YegI.

The enzyme catalyses O-phospho-L-seryl-[protein] + H2O = L-seryl-[protein] + phosphate. It catalyses the reaction O-phospho-L-threonyl-[protein] + H2O = L-threonyl-[protein] + phosphate. With respect to regulation, activity dramatically decreases in the presence of the general protein phosphatase inhibitor sodium phosphate. Slightly inhibited by sodium fluoride. Activity decreases in the presence of the metal chelator EDTA. Its function is as follows. PP2C-like phosphatase that can dephosphorylate YegI. In vitro, can hydrolyze p-nitrophenyl phosphate (pNPP) to p-nitrophenol. This Escherichia coli (strain K12) protein is Serine/threonine-protein phosphatase 3.